The following is a 1345-amino-acid chain: Vascular endothelial growth factor receptor 2 (1345 aa).

A signal peptide spans 1–19 (MESKALLAVALWFCVETRA). Over 20–762 (ASVGLPGDFL…EGAQEKTNLE (743 aa)) the chain is Extracellular. 5 N-linked (GlcNAc...) asparagine glycosylation sites follow: Asn-46, Asn-98, Asn-145, Asn-160, and Asn-247. Ig-like C2-type domains follow at residues 46–111 (NTTL…RDVD), 143–209 (NKNK…INDE), 226–325 (YDVI…TFVR), 330–416 (PFIA…HMVS), 423–542 (PQIG…RVIS), 549–656 (PEIT…LVKQ), and 665–751 (PMIT…TLFI). Cys-53 and Cys-105 form a disulfide bridge. A disulfide bridge links Cys-152 with Cys-202. Residues Cys-248 and Cys-309 are joined by a disulfide bond. Asn-320, Asn-376, Asn-397, Asn-509, Asn-521, Asn-578, Asn-611, Asn-617, Asn-629, Asn-673, Asn-702, and Asn-719 each carry an N-linked (GlcNAc...) asparagine glycan. Cystine bridges form between Cys-447/Cys-528 and Cys-569/Cys-640. A disulfide bridge links Cys-686 with Cys-735. A helical membrane pass occupies residues 763 to 783 (VIILVGTAVIAMFFWLLLVIV). Residues 784–1345 (LRTVKRANEG…SGTTLRSPPV (562 aa)) lie on the Cytoplasmic side of the membrane. Tyr-799 bears the Phosphotyrosine mark. Positions 832 to 1160 (LKLGKPLGRG…FSELVEHLGN (329 aa)) constitute a Protein kinase domain. Residues 838 to 846 (LGRGAFGQV) and Lys-866 contribute to the ATP site. Tyr-949 bears the Phosphotyrosine; by autocatalysis mark. 2 positions are modified to phosphoserine: Ser-980 and Ser-982. Tyr-994 bears the Phosphotyrosine; by autocatalysis mark. A disulfide bridge connects residues Cys-1022 and Cys-1043. Asp-1026 functions as the Proton acceptor in the catalytic mechanism. A phosphotyrosine; by autocatalysis mark is found at Tyr-1052, Tyr-1057, Tyr-1173, and Tyr-1212. 2 positions are modified to phosphoserine: Ser-1229 and Ser-1233. Thr-1236 is subject to Phosphothreonine. Residues 1272–1316 (DRNKLSPSFGGMMPSKSRESVASEGSNQTSGYQSGYHSDDTDTTV) are disordered. Over residues 1294–1307 (SEGSNQTSGYQSGY) the composition is skewed to polar residues. Phosphotyrosine; by autocatalysis occurs at positions 1303, 1307, and 1317.

It belongs to the protein kinase superfamily. Tyr protein kinase family. CSF-1/PDGF receptor subfamily. Homodimer in the presence of bound dimeric VEGFA, VEGFC or VEGFD ligands; monomeric in the absence of bound ligands. Can also form heterodimers with FLT1/VEGFR1 and KDR/VEGFR2. Interacts (tyrosine phosphorylated) with LFYN, NCK1, PLCG1. Interacts (tyrosine-phosphorylated active form preferentially) with DAB2IP (via C2 domain and active form preferentially); the interaction occurs at the late phase of VEGFA response and inhibits KDR/VEGFR2 activity. Interacts with SHBSH2D2A/TSAD, GRB2, MYOF, CBL and PDCD6. Interacts (via C-terminus domain) with ERN1 (via kinase domain); the interaction is facilitated in a XBP1 isoform 1- and vascular endothelial growth factor (VEGF)-dependent manner in endothelial cells. Interacts (via juxtamembrane region) with chaperone PDCL3 (via thioredoxin fold region); the interaction leads to increased KDR/VEGFR2 abundance through inhibition of its ubiquitination and degradation. Interacts (tyrosine phosphorylated) with CCDC88A/GIV (via SH2-like region); binding requires autophosphorylation of the KDR/VEGFR2 C-terminal region. Interacts with isoform 2 of BSG. Interacts with SLC31A1; this interaction is induced upon VEGFA stimulation leading to SLC31A1 and KDR subsequent co-internalization to early endosomes, thereby activating KDR downstream signaling in endothelial cells. In terms of processing, N-glycosylated. Ubiquitinated. Tyrosine phosphorylation of the receptor promotes its poly-ubiquitination, leading to its degradation via the proteasome or lysosomal proteases. Post-translationally, autophosphorylated on tyrosine residues upon ligand binding. Autophosphorylation occurs in trans, i.e. one subunit of the dimeric receptor phosphorylates tyrosine residues on the other subunit. Phosphorylation at Tyr-949 is important for interaction with SH2D2A/TSAD and VEGFA-mediated reorganization of the actin cytoskeleton. Phosphorylation at Tyr-1173 is important for interaction with PLCG1 and SHB. Phosphorylation at Tyr-1212 is important for interaction with NCK1 and FYN. Dephosphorylated by PTPRJ at Tyr-799, Tyr-949, Tyr-994, Tyr-1052, Tyr-1057, Tyr-1173 and Tyr-1212. In terms of processing, the inhibitory disulfide bond between Cys-1022 and Cys-1043 may serve as a specific molecular switch for H(2)S-induced modification that regulates KDR/VEGFR2 function. Expressed in endothelial cells (at protein level). Detected in embryonic endothelial cells, as well as hematopoietic stem and progenitor cells. Detected in vascular endothelium. Expressed at high levels in adult heart, lung, kidney, brain and skeletal muscle, but is also expressed at lower levels in most other adult tissues.

The protein resides in the cell junction. It localises to the endoplasmic reticulum. Its subcellular location is the cell membrane. It is found in the cytoplasm. The protein localises to the nucleus. The protein resides in the cytoplasmic vesicle. It localises to the early endosome. Its subcellular location is the secreted. It catalyses the reaction L-tyrosyl-[protein] + ATP = O-phospho-L-tyrosyl-[protein] + ADP + H(+). Present in an inactive conformation in the absence of bound ligand. Binding of VEGFA, VEGFC or VEGFD leads to dimerization and activation by autophosphorylation on tyrosine residues. May be regulated by hydrogen sulfide (H(2)S) levels via a sensitive intracellular disulfide bond. Functionally, tyrosine-protein kinase that acts as a cell-surface receptor for VEGFA, VEGFC and VEGFD. Plays an essential role in the regulation of angiogenesis, vascular development, vascular permeability, and embryonic hematopoiesis. Promotes proliferation, survival, migration and differentiation of endothelial cells. Promotes reorganization of the actin cytoskeleton. Isoforms lacking a transmembrane domain, such as isoform 2, may function as decoy receptors for VEGFA, VEGFC and/or VEGFD. Isoform 2 plays an important role as a negative regulator of VEGFA- and VEGFC-mediated lymphangiogenesis by limiting the amount of free VEGFA and/or VEGFC and by preventing their binding to FLT4. Modulates FLT1 and FLT4 signaling by forming heterodimers. Binding of vascular growth factors to isoform 1 leads to the activation of several signaling cascades. Activation of PLCG1 leads to the production of the cellular signaling molecules diacylglycerol and inositol 1,4,5-trisphosphate and the activation of protein kinase C. Mediates activation of MAPK1/ERK2, MAPK3/ERK1 and the MAP kinase signaling pathway, as well as of the AKT1 signaling pathway. Mediates phosphorylation of PIK3R1, the regulatory subunit of phosphatidylinositol 3-kinase, reorganization of the actin cytoskeleton and activation of PTK2/FAK1. Required for VEGFA-mediated induction of NOS2 and NOS3, leading to the production of the signaling molecule nitric oxide (NO) by endothelial cells. Phosphorylates PLCG1. Promotes phosphorylation of FYN, NCK1, NOS3, PIK3R1, PTK2/FAK1 and SRC. This is Vascular endothelial growth factor receptor 2 from Mus musculus (Mouse).